The following is a 487-amino-acid chain: DNA-dependent metalloprotease SPRTN (487 aa).

Methionine 1 is modified (N-acetylmethionine). The SprT-like domain maps to 45-212 (LQGLFVLFND…KTCGGTYIKI (168 aa)). Residue histidine 111 coordinates Zn(2+). Glutamate 112 is an active-site residue. The Zn(2+) site is built by histidine 115 and histidine 130. The interval 219–248 (SKKGKGKTKLRKQPVSEAENKDKPNRGEKQ) is disordered. Residues 220–230 (KKGKGKTKLRK) show a composition bias toward basic residues. Lysine 230 carries the N6-acetyllysine modification. Basic and acidic residues predominate over residues 236–247 (AENKDKPNRGEK). The SHP-box signature appears at 253–261 (FTGKGYVLG). Serine 267 carries the phosphoserine modification. The segment covering 280-289 (SQEPLSQDHS) has biased composition (polar residues). Positions 280–317 (SQEPLSQDHSANALRPHSKTEVKFEQNGPSKKTSVASP) are disordered. Residue lysine 302 forms a Glycyl lysine isopeptide (Lys-Gly) (interchain with G-Cter in SUMO2) linkage. The segment covering 306-317 (NGPSKKTSVASP) has biased composition (polar residues). A PIP-box motif is present at residues 324 to 331 (QNVLSNYF). A Glycyl lysine isopeptide (Lys-Gly) (interchain with G-Cter in SUMO2); alternate cross-link involves residue lysine 340. Residue lysine 340 forms a Glycyl lysine isopeptide (Lys-Gly) (interchain with G-Cter in ubiquitin); alternate linkage. The disordered stretch occupies residues 347–379 (GSPVKSLTVGDSTTKSVSAGSQRRVTSSRTSLR). Serine 373 is modified (phosphoserine). Positions 401-412 (GKLPSKRPRIED) match the Nuclear localization signal motif. Lysine 413 is covalently cross-linked (Glycyl lysine isopeptide (Lys-Gly) (interchain with G-Cter in ubiquitin)). Glycyl lysine isopeptide (Lys-Gly) (interchain with G-Cter in SUMO2) cross-links involve residues lysine 422 and lysine 423. The tract at residues 427–455 (QSGGGDVTSSSHPPAAAQSPSGASGQSRV) is disordered. The segment covering 435-453 (SSSHPPAAAQSPSGASGQS) has biased composition (low complexity). The UBZ4-type zinc finger occupies 455-482 (VVHCPVCQDEVSETQINEHLDWCLERDS). Positions 458, 461, 473, and 477 each coordinate Zn(2+). A Glycyl lysine isopeptide (Lys-Gly) (interchain with G-Cter in SUMO2) cross-link involves residue lysine 486.

This sequence belongs to the Spartan family. Homodimer. Interacts (VIA PIP-box) with PCNA (when ubiquitinated). Interacts (via its SHP-box) with VCP/p97. Interacts with RAD18. Interacts with KCTD13 and POLD3. It depends on Zn(2+) as a cofactor. Autocatalytically cleaved in response to double-stranded DNA-binding: autocatalytic cleavage takes place in trans and leads to inactivation. In terms of processing, monoubiquitinated; monoubiquitination promotes exclusion from chromatin. Deubiquitinated by VCPIP1: deubiquitination is required for subsequent acetylation and recruitment to chromatin and DNA damage sites. Post-translationally, acetylated following deubiquitination by VCPIP1, leading to recruitment to chromatin and DNA damage sites. Phosphorylation by CHEK1 promotes recruitment to chromatin.

Its subcellular location is the nucleus. It is found in the chromosome. With respect to regulation, DNA-binding activates the protease activity: single-stranded DNA-binding specifically activates ability to cleave covalent DNA-protein cross-links (DPCs). In contrast, double-stranded DNA-binding specifically activates autocatalytic cleavage, and subsequent inactivation. Its function is as follows. DNA-dependent metalloendopeptidase that mediates the proteolytic cleavage of covalent DNA-protein cross-links (DPCs) during DNA synthesis, thereby playing a key role in maintaining genomic integrity. DPCs are highly toxic DNA lesions that interfere with essential chromatin transactions, such as replication and transcription, and which are induced by reactive agents, such as UV light or formaldehyde. Associates with the DNA replication machinery and specifically removes DPCs during DNA synthesis. Catalyzes proteolytic cleavage of the HMCES DNA-protein cross-link following unfolding by the BRIP1/FANCJ helicase. Acts as a pleiotropic protease for DNA-binding proteins cross-linked with DNA, such as TOP1, TOP2A, histones H3 and H4. Mediates degradation of DPCs that are not ubiquitinated, while it is not able to degrade ubiquitinated DPCs. SPRTN activation requires polymerase collision with DPCs followed by helicase bypass of DPCs. Involved in recruitment of VCP/p97 to sites of DNA damage. Also acts as an activator of CHEK1 during normal DNA replication by mediating proteolytic cleavage of CHEK1, thereby promoting CHEK1 removal from chromatin and subsequent activation. Does not activate CHEK1 in response to DNA damage. May also act as a 'reader' of ubiquitinated PCNA: recruited to sites of UV damage and interacts with ubiquitinated PCNA and RAD18, the E3 ubiquitin ligase that monoubiquitinates PCNA. Facilitates chromatin association of RAD18 and is required for efficient PCNA monoubiquitination, promoting a feed-forward loop to enhance PCNA ubiquitination and translesion DNA synthesis. This chain is DNA-dependent metalloprotease SPRTN, found in Bos taurus (Bovine).